A 115-amino-acid chain; its full sequence is Pycsar effector protein TpPycTM (115 aa).

Helical transmembrane passes span 44-64 (IGNL…YATN) and 74-94 (VWNI…VILV).

It is found in the cell inner membrane. Functionally, pycsar (pyrimidine cyclase system for antiphage resistance) provides immunity against bacteriophage. The pyrimidine cyclase (PycC) synthesizes cyclic nucleotides in response to infection; these serve as specific second messenger signals. The signals activate the adjacent effector, leading to bacterial cell death and abortive phage infection. A clade C Pycsar system. In terms of biological role, the effector gene of a two-gene Pycsar system. Expression of this and adjacent uridylate cyclase TpPycC (AC A0A1T4LJ54) probably confers resistance to bacteriophage. The genes are probably only expressed in response to bacteriophage infection. Probably only responds to cUMP (produced by its cognate NTP cyclase), acts by impairing membrane integrity. In Treponema porcinum, this protein is Pycsar effector protein TpPycTM.